The following is a 258-amino-acid chain: 3-deoxy-manno-octulosonate cytidylyltransferase (258 aa).

Belongs to the KdsB family.

It is found in the cytoplasm. The catalysed reaction is 3-deoxy-alpha-D-manno-oct-2-ulosonate + CTP = CMP-3-deoxy-beta-D-manno-octulosonate + diphosphate. Its pathway is nucleotide-sugar biosynthesis; CMP-3-deoxy-D-manno-octulosonate biosynthesis; CMP-3-deoxy-D-manno-octulosonate from 3-deoxy-D-manno-octulosonate and CTP: step 1/1. The protein operates within bacterial outer membrane biogenesis; lipopolysaccharide biosynthesis. Its function is as follows. Activates KDO (a required 8-carbon sugar) for incorporation into bacterial lipopolysaccharide in Gram-negative bacteria. The chain is 3-deoxy-manno-octulosonate cytidylyltransferase from Parvibaculum lavamentivorans (strain DS-1 / DSM 13023 / NCIMB 13966).